The sequence spans 234 residues: Ribose-5-phosphate isomerase A (234 aa).

Substrate is bound by residues 28-31 (TGST), 85-88 (DGAD), and 98-101 (KGLG). Residue E107 is the Proton acceptor of the active site. A substrate-binding site is contributed by K125.

The protein belongs to the ribose 5-phosphate isomerase family. As to quaternary structure, homodimer.

The enzyme catalyses aldehydo-D-ribose 5-phosphate = D-ribulose 5-phosphate. It functions in the pathway carbohydrate degradation; pentose phosphate pathway; D-ribose 5-phosphate from D-ribulose 5-phosphate (non-oxidative stage): step 1/1. Its function is as follows. Catalyzes the reversible conversion of ribose-5-phosphate to ribulose 5-phosphate. The polypeptide is Ribose-5-phosphate isomerase A (Roseiflexus castenholzii (strain DSM 13941 / HLO8)).